The primary structure comprises 469 residues: MNPNQKIITIGSVSLTIATVCSLMQIAILATTVTLHFKQHECDSPASNQVMPCEPIIIERNITEIVYLNNTTIEKEICPEVVEYRNWSKPQCQITGFAPFSKDNSIRLSAGGDIWVTREPYVSCDPGKCYQFALGQGTTLDNKHSNGTIHDRIPHRTLLMNELGVPFHLGTKQVCVAWSSSSCHDGKAWLHVCVTGDDRNATASFIYDGRLVDSIGSWSQNILRTQESECVCINGTCTVVMTDGSASGRADTRILFIKEGKIVHISPLSGSAQHIEECSCYPRYPDVRCICRDNWKGSNRPVIDINMEDYSIDSSYVCSGLVGDTPRNDDSSSNSNCRDPNNERGNPGVKGWAFDNGDDVWMGRTISKDSRSGYETFKVIGGWSTPNSKSQVNRQVIVDNNNWSGYSGIFSVEGKSCINRCFYVELIRGRPQETRVWWTSNSIVVFCGTSGTYGTGSWPDGANINFMPI.

Topologically, residues 1 to 6 are intravirion; that stretch reads MNPNQK. Residues 7–29 traverse the membrane as a helical segment; sequence IITIGSVSLTIATVCSLMQIAIL. Residues 11–33 form an involved in apical transport and lipid raft association region; that stretch reads GSVSLTIATVCSLMQIAILATTV. Residues 30–469 lie on the Virion surface side of the membrane; sequence ATTVTLHFKQ…DGANINFMPI (440 aa). The interval 36 to 88 is hypervariable stalk region; sequence HFKQHECDSPASNQVMPCEPIIIERNITEIVYLNNTTIEKEICPEVVEYRNWS. Asparagine 61, asparagine 69, asparagine 70, and asparagine 86 each carry an N-linked (GlcNAc...) asparagine; by host glycan. The interval 91-469 is head of neuraminidase; it reads QCQITGFAPF…DGANINFMPI (379 aa). 8 disulfides stabilise this stretch: cysteine 92–cysteine 417, cysteine 124–cysteine 129, cysteine 183–cysteine 230, cysteine 232–cysteine 237, cysteine 278–cysteine 291, cysteine 280–cysteine 289, cysteine 318–cysteine 337, and cysteine 421–cysteine 447. Substrate is bound at residue arginine 118. N-linked (GlcNAc...) asparagine; by host glycosylation occurs at asparagine 146. The active-site Proton donor/acceptor is the aspartate 151. A substrate-binding site is contributed by arginine 152. Asparagine 200 and asparagine 234 each carry an N-linked (GlcNAc...) asparagine; by host glycan. Residue 276–277 participates in substrate binding; the sequence is EE. Arginine 292 serves as a coordination point for substrate. The Ca(2+) site is built by aspartate 293, glycine 297, and aspartate 324. Residues 325-349 are disordered; it reads TPRNDDSSSNSNCRDPNNERGNPGV. Arginine 371 provides a ligand contact to substrate. Residue asparagine 402 is glycosylated (N-linked (GlcNAc...) asparagine; by host). Tyrosine 406 functions as the Nucleophile in the catalytic mechanism.

Belongs to the glycosyl hydrolase 34 family. As to quaternary structure, homotetramer. It depends on Ca(2+) as a cofactor. In terms of processing, N-glycosylated.

It is found in the virion membrane. It localises to the host apical cell membrane. It catalyses the reaction Hydrolysis of alpha-(2-&gt;3)-, alpha-(2-&gt;6)-, alpha-(2-&gt;8)- glycosidic linkages of terminal sialic acid residues in oligosaccharides, glycoproteins, glycolipids, colominic acid and synthetic substrates.. With respect to regulation, inhibited by the neuraminidase inhibitors zanamivir (Relenza) and oseltamivir (Tamiflu). These drugs interfere with the release of progeny virus from infected cells and are effective against all influenza strains. Resistance to neuraminidase inhibitors is quite rare. Its function is as follows. Catalyzes the removal of terminal sialic acid residues from viral and cellular glycoconjugates. Cleaves off the terminal sialic acids on the glycosylated HA during virus budding to facilitate virus release. Additionally helps virus spread through the circulation by further removing sialic acids from the cell surface. These cleavages prevent self-aggregation and ensure the efficient spread of the progeny virus from cell to cell. Otherwise, infection would be limited to one round of replication. Described as a receptor-destroying enzyme because it cleaves a terminal sialic acid from the cellular receptors. May facilitate viral invasion of the upper airways by cleaving the sialic acid moieties on the mucin of the airway epithelial cells. Likely to plays a role in the budding process through its association with lipid rafts during intracellular transport. May additionally display a raft-association independent effect on budding. Plays a role in the determination of host range restriction on replication and virulence. Sialidase activity in late endosome/lysosome traffic seems to enhance virus replication. This Influenza A virus (strain A/Leningrad/134/17/1957 H2N2) protein is Neuraminidase.